A 287-amino-acid chain; its full sequence is Mitochondrial glycine transporter B (287 aa).

Solcar repeat units lie at residues 7 to 97 (HPAL…LKQH), 104 to 188 (PSAG…AKKA), and 198 to 282 (IAPL…LMAR). Transmembrane regions (helical) follow at residues 13–38 (FMCG…TRLQ), 72–98 (GVSP…KQHY), 110–135 (VLLG…TRFE), 163–186 (GLTA…SQAK), 202–228 (VNFG…KTHM), and 257–275 (GAVP…AWTV).

It belongs to the mitochondrial carrier (TC 2.A.29) family. SLC25A38 subfamily. At 24 hours post-fertilization, expressed predominantly in posterior blood island, posterior cardinal vein and circulating blood. At 34 hours post-fertilization, becomes restricted to posterior blood island and circulating blood.

It localises to the mitochondrion inner membrane. The enzyme catalyses glycine(in) = glycine(out). In terms of biological role, mitochondrial glycine transporter that imports glycine into the mitochondrial matrix. Plays an important role in providing glycine for the first enzymatic step in heme biosynthesis, the condensation of glycine with succinyl-CoA to produce 5-aminolevulinate (ALA) in the mitochondrial matrix. Required during erythropoiesis. May play a role as pro-apoptotic protein that induces caspase-dependent apoptosis. The protein is Mitochondrial glycine transporter B (slc25a38b) of Danio rerio (Zebrafish).